The primary structure comprises 108 residues: FK506-binding protein 1 (108 aa).

Residues 20-108 (GDAVTIHYVG…VFDVELLGIN (89 aa)) enclose the PPIase FKBP-type domain.

Belongs to the FKBP-type PPIase family. FKBP1 subfamily.

It localises to the cytoplasm. The catalysed reaction is [protein]-peptidylproline (omega=180) = [protein]-peptidylproline (omega=0). Its activity is regulated as follows. Inhibited by both FK506 and rapamycin. Functionally, PPIases accelerate the folding of proteins. It catalyzes the cis-trans isomerization of proline imidic peptide bonds in oligopeptides. This chain is FK506-binding protein 1 (FPR1), found in Yarrowia lipolytica (strain CLIB 122 / E 150) (Yeast).